Reading from the N-terminus, the 411-residue chain is LL-diaminopimelate aminotransferase (411 aa).

Residues Y15 and G42 each contribute to the substrate site. Pyridoxal 5'-phosphate-binding positions include Y72, 105-106, Y129, N186, Y217, and 245-247; these read SK and SFS. Residues K106, Y129, and N186 each contribute to the substrate site. Position 248 is an N6-(pyridoxal phosphate)lysine (K248). R256 and N287 together coordinate pyridoxal 5'-phosphate. Residues N287 and R382 each contribute to the substrate site.

The protein belongs to the class-I pyridoxal-phosphate-dependent aminotransferase family. LL-diaminopimelate aminotransferase subfamily. In terms of assembly, homodimer. The cofactor is pyridoxal 5'-phosphate.

The catalysed reaction is (2S,6S)-2,6-diaminopimelate + 2-oxoglutarate = (S)-2,3,4,5-tetrahydrodipicolinate + L-glutamate + H2O + H(+). It functions in the pathway amino-acid biosynthesis; L-lysine biosynthesis via DAP pathway; LL-2,6-diaminopimelate from (S)-tetrahydrodipicolinate (aminotransferase route): step 1/1. In terms of biological role, involved in the synthesis of meso-diaminopimelate (m-DAP or DL-DAP), required for both lysine and peptidoglycan biosynthesis. Catalyzes the direct conversion of tetrahydrodipicolinate to LL-diaminopimelate. Is also able to use meso-diaminopimelate, lysine or ornithine as substrates. This chain is LL-diaminopimelate aminotransferase, found in Protochlamydia amoebophila (strain UWE25).